A 302-amino-acid chain; its full sequence is Enolase-phosphatase E1 (302 aa).

The segment covering 1-10 has biased composition (basic residues); that stretch reads MSDSRLRRRQ. The interval 1 to 25 is disordered; the sequence is MSDSRLRRRQGTAGTDNKRRADGPH. The segment covering 16–25 has biased composition (basic and acidic residues); that stretch reads DNKRRADGPH. Mg(2+) is bound by residues D40 and E42. Substrate contacts are provided by residues 183–184 and K217; that span reads SS. Position 242 (D242) interacts with Mg(2+).

Belongs to the HAD-like hydrolase superfamily. MasA/MtnC family. As to quaternary structure, monomer. Mg(2+) serves as cofactor.

The protein localises to the cytoplasm. The protein resides in the nucleus. It catalyses the reaction 5-methylsulfanyl-2,3-dioxopentyl phosphate + H2O = 1,2-dihydroxy-5-(methylsulfanyl)pent-1-en-3-one + phosphate. The protein operates within amino-acid biosynthesis; L-methionine biosynthesis via salvage pathway; L-methionine from S-methyl-5-thio-alpha-D-ribose 1-phosphate: step 3/6. Its pathway is amino-acid biosynthesis; L-methionine biosynthesis via salvage pathway; L-methionine from S-methyl-5-thio-alpha-D-ribose 1-phosphate: step 4/6. Bifunctional enzyme that catalyzes the enolization of 2,3-diketo-5-methylthiopentyl-1-phosphate (DK-MTP-1-P) into the intermediate 2-hydroxy-3-keto-5-methylthiopentenyl-1-phosphate (HK-MTPenyl-1-P), which is then dephosphorylated to form the acireductone 1,2-dihydroxy-3-keto-5-methylthiopentene (DHK-MTPene). The chain is Enolase-phosphatase E1 from Branchiostoma floridae (Florida lancelet).